An 81-amino-acid chain; its full sequence is uncharacterized protein (81 aa).

Transmembrane regions (helical) follow at residues 10–30 (FFVL…FLLL) and 56–76 (VLYL…AFAI).

Its subcellular location is the host membrane. This is an uncharacterized protein from Acidianus two-tailed virus (ATV).